The chain runs to 580 residues: 2-hydroxyacyl-CoA lyase 1 (580 aa).

Residue glutamate 47 coordinates thiamine diphosphate. The interval 413–494 is thiamine pyrophosphate binding; it reads TMDIGRLCIP…FIVLNNNGVY (82 aa). The Mg(2+) site is built by aspartate 463 and asparagine 490.

Belongs to the TPP enzyme family. Homotetramer. Requires Mg(2+) as cofactor. Thiamine diphosphate is required as a cofactor.

The protein localises to the peroxisome. It carries out the reaction a 2-hydroxy-3-methyl fatty acyl-CoA = a 2-methyl-branched fatty aldehyde + formyl-CoA. The enzyme catalyses an (R)-2-hydroxy-long-chain-fatty acyl-CoA = a long-chain fatty aldehyde + formyl-CoA. It catalyses the reaction 2-hydroxy-3-methylhexadecanoyl-CoA = 2-methylpentadecanal + formyl-CoA. The catalysed reaction is 2-hydroxyoctadecanoyl-CoA = heptadecanal + formyl-CoA. Peroxisomal 2-OH acyl-CoA lyase involved in the cleavage (C1 removal) reaction in the fatty acid alpha-oxydation in a thiamine pyrophosphate (TPP)-dependent manner. Involved in the degradation of 3-methyl-branched fatty acids and the shortening of 2-hydroxy long-chain fatty acids. This is 2-hydroxyacyl-CoA lyase 1 (hacl1) from Dictyostelium discoideum (Social amoeba).